Reading from the N-terminus, the 701-residue chain is F-box/LRR-repeat protein 17 (701 aa).

3 disordered regions span residues 73–93 (SAGLEEEPPLSPPPPPPRDGA), 227–250 (GGGGPAGGGASPPRPPDAGCCQAP), and 279–321 (VRAG…IPDI). Positions 81–90 (PLSPPPPPPR) are enriched in pro residues. The span at 227–236 (GGGGPAGGGA) shows a compositional bias: gly residues. Polar residues predominate over residues 285–294 (APSSAQQQPE). Residues 318–365 (IPDINQLPPSILLKIFSNLSLNERCLSASLVCKYWRDLCLDFQFWKQL) form the F-box domain.

The protein belongs to the FBXL17 family. As to quaternary structure, part of the SCF (SKP1-CUL1-F-box) E3 ubiquitin-protein ligase complex SCF(FBXL17) composed of CUL1, SKP1, RBX1 and FBXL17. Interacts with BTB domain-containing proteins such as KLHL12, BCL6 and BACH1; specifically recognizes and binds a conserved degron of non-consecutive residues present at the interface of BTB dimers of aberrant composition. Interacts with SUFU. Interacts with PRMT1.

The protein resides in the cytoplasm. It is found in the nucleus. Its function is as follows. Substrate-recognition component of the SCF(FBXL17) E3 ubiquitin ligase complex, a key component of a quality control pathway required to ensure functional dimerization of BTB domain-containing proteins (dimerization quality control, DQC). FBXL17 specifically recognizes and binds a conserved degron of non-consecutive residues present at the interface of BTB dimers of aberrant composition: aberrant BTB dimer are then ubiquitinated by the SCF(FBXL17) complex and degraded by the proteasome. The ability of the SCF(FBXL17) complex to eliminate compromised BTB dimers is required for the differentiation and survival of neural crest and neuronal cells. The SCF(FBXL17) complex mediates ubiquitination and degradation of BACH1. The SCF(FBXL17) complex is also involved in the regulation of the hedgehog/smoothened (Hh) signaling pathway by mediating the ubiquitination and degradation of SUFU, allowing the release of GLI1 from SUFU for proper Hh signal transduction. The SCF(FBXL17) complex mediates ubiquitination and degradation of PRMT1. The protein is F-box/LRR-repeat protein 17 of Mus musculus (Mouse).